A 213-amino-acid polypeptide reads, in one-letter code: Sclerostin (213 aa).

A signal peptide spans 1–23 (MQLPLALCLVCLLVHTAFRVVEG). The interval 41-71 (GEYPEPPPELENNKTMNRAENGGRPPHHPFE) is disordered. Asparagine 53 carries an N-linked (GlcNAc...) asparagine glycan. Intrachain disulfides connect cysteine 80-cysteine 134, cysteine 94-cysteine 148, cysteine 105-cysteine 165, and cysteine 109-cysteine 167. A CTCK domain is found at 82 to 172 (ELHFTRYVTD…ASCKCKRLTR (91 aa)). Asparagine 175 is a glycosylation site (N-linked (GlcNAc...) asparagine). Positions 178-213 (ELKDFGTEAARPQKGRKPRPRARSAKANQAELENAY) are disordered. Over residues 190 to 201 (QKGRKPRPRARS) the composition is skewed to basic residues.

This sequence belongs to the sclerostin family. In terms of assembly, interacts with LRP4 (via the extracellular domain); the interaction facilitates the inhibition of Wnt signaling. Interacts with LRP5 (via the first two YWTD-EGF repeat domains); the interaction inhibits Wnt-mediated signaling. Interacts with LRP6. As to expression, widely expressed at low levels with highest levels in bone, cartilage, kidney, liver, bone marrow and primary osteoblasts differentiated for 21 days. Detected in the subendothelial layer of the aortic intima (at protein level).

It is found in the secreted. The protein resides in the extracellular space. It localises to the extracellular matrix. In terms of biological role, negative regulator of bone growth that acts through inhibition of Wnt signaling and bone formation. The sequence is that of Sclerostin from Homo sapiens (Human).